Consider the following 156-residue polypeptide: Ribosome maturation factor RimP (156 aa).

Belongs to the RimP family.

The protein localises to the cytoplasm. Functionally, required for maturation of 30S ribosomal subunits. This is Ribosome maturation factor RimP from Lachnospira eligens (strain ATCC 27750 / DSM 3376 / VPI C15-48 / C15-B4) (Eubacterium eligens).